The primary structure comprises 300 residues: Delta(7)-sterol 5(6)-desaturase erg31 (300 aa).

The next 3 membrane-spanning stretches (helical) occupy residues 33 to 53, 78 to 98, and 117 to 137; these read ISLFFLTWFGGMFLYLTFASL, VLTALQNLPGMALLTVPWFLA, and YFLCSLPLFVMFSDFGIYWAH. The Fatty acid hydroxylase domain occupies 123-248; the sequence is PLFVMFSDFG…FTTLFDRLGN (126 aa). A Histidine box-1 motif is present at residues 137–141; it reads HRFLH. Residues 150–154 carry the Histidine box-2 motif; it reads HKLHH. A helical transmembrane segment spans residues 180-200; sequence HLFPFFFPLHKLTYLALFTFV. A Histidine box-3 motif is present at residues 225 to 229; that stretch reads HNGHH.

The protein belongs to the sterol desaturase family. Requires Fe cation as cofactor.

It localises to the endoplasmic reticulum membrane. The enzyme catalyses episterol + 2 Fe(II)-[cytochrome b5] + O2 + 2 H(+) = 5-dehydroepisterol + 2 Fe(III)-[cytochrome b5] + 2 H2O. It functions in the pathway steroid metabolism; ergosterol biosynthesis. Its function is as follows. C-5 sterol desaturase; part of the third module of ergosterol biosynthesis pathway that includes by the late steps of the pathway. Erg31 and erg32 catalyze the introduction of a C-5 double bond in the B ring to produce 5-dehydroepisterol. The third module or late pathway involves the ergosterol synthesis itself through consecutive reactions that mainly occur in the endoplasmic reticulum (ER) membrane. Firstly, the squalene synthase erg9 catalyzes the condensation of 2 farnesyl pyrophosphate moieties to form squalene, which is the precursor of all steroids. Secondly, squalene is converted into lanosterol by the consecutive action of the squalene epoxidase erg1 and the lanosterol synthase erg7. The lanosterol 14-alpha-demethylase erg11/cyp1 catalyzes C14-demethylation of lanosterol to produce 4,4'-dimethyl cholesta-8,14,24-triene-3-beta-ol. In the next steps, a complex process involving various demethylation, reduction and desaturation reactions catalyzed by the C-14 reductase erg24 and the C-4 demethylation complex erg25-erg26-erg27 leads to the production of zymosterol. Erg28 likely functions in the C-4 demethylation complex reaction by tethering erg26 and Erg27 to the endoplasmic reticulum or to facilitate interaction between these proteins. Then, the sterol 24-C-methyltransferase erg6 catalyzes the methyl transfer from S-adenosyl-methionine to the C-24 of zymosterol to form fecosterol. The C-8 sterol isomerase erg2 catalyzes the reaction which results in unsaturation at C-7 in the B ring of sterols and thus converts fecosterol to episterol. The sterol-C5-desaturases erg31 and erg32 then catalyze the introduction of a C-5 double bond in the B ring to produce 5-dehydroepisterol. The C-22 sterol desaturase erg5 further converts 5-dehydroepisterol into ergosta-5,7,22,24(28)-tetraen-3beta-ol by forming the C-22(23) double bond in the sterol side chain. Finally, ergosta-5,7,22,24(28)-tetraen-3beta-ol is substrate of the C-24(28) sterol reductase erg4 to produce ergosterol. In the genus Schizosaccharomyces, a second route exists between lanosterol and fecosterol, via the methylation of lanosterol to eburicol by erg6, followed by C14-demethylation by erg11/cyp1 and C4-demethylation by the demethylation complex erg25-erg26-erg27. The polypeptide is Delta(7)-sterol 5(6)-desaturase erg31 (Schizosaccharomyces pombe (strain 972 / ATCC 24843) (Fission yeast)).